We begin with the raw amino-acid sequence, 154 residues long: Endoribonuclease YbeY (154 aa).

Positions 114, 118, and 124 each coordinate Zn(2+).

It belongs to the endoribonuclease YbeY family. Requires Zn(2+) as cofactor.

The protein resides in the cytoplasm. In terms of biological role, single strand-specific metallo-endoribonuclease involved in late-stage 70S ribosome quality control and in maturation of the 3' terminus of the 16S rRNA. The polypeptide is Endoribonuclease YbeY (Histophilus somni (strain 2336) (Haemophilus somnus)).